The chain runs to 1463 residues: Probable oxidoreductase PXDNL (1463 aa).

Positions 1 to 23 are cleaved as a signal peptide; it reads MEPRLFCWTTLFLLAGWCLPGLP. Positions 24–50 constitute an LRRNT domain; the sequence is CPSRCLCFKSTVRCMHLMLDHIPQVPQ. LRR repeat units lie at residues 51–72, 75–96, 99–120, 123–144, and 147–168; these read QTTV…AFKK, NLNT…AFEG, NLLY…TFKG, SLEH…TFGD, and RLER…SFSN. In terms of domain architecture, LRRCT spans 180–233; it reads NALVCDCDLMWLGELLQGFAQHGHTQAAATCEYPRRLHGRAVASVTVEEFNCQS. 4 Ig-like C2-type domains span residues 234–322, 330–414, 419–504, and 507–596; these read PRIT…AMLR, PSFV…ANII, PQFT…VQLT, and PKAL…MFLT. Intrachain disulfides connect Cys255–Cys305, Cys351–Cys398, Cys440–Cys488, Cys532–Cys580, and Cys718–Cys734. The N-linked (GlcNAc...) asparagine glycan is linked to Asn387. His812 functions as the Proton acceptor in the catalytic mechanism. Asp813 is a binding site for Ca(2+). 2 disulfides stabilise this stretch: Cys832–Cys842 and Cys836–Cys859. The Ca(2+) site is built by Thr891, Tyr893, Asp895, and Ser897. Cys944 and Cys953 are disulfide-bonded. His1057 is a heme b binding site. Intrachain disulfides connect Cys1160–Cys1217 and Cys1258–Cys1284. Positions 1393–1451 constitute a VWFC domain; sequence AGCTDVRGVPRKAEERWMKEDCTHCICESGQVTCVVEICPPAPCPSPELVKGTCCPVCR.

It belongs to the peroxidase family. XPO subfamily. In terms of assembly, interacts with PXDN; this interaction inhibits the peroxidase activity of PXDN. Heme b is required as a cofactor. Phosphorylation by SRC on tyrosine residues is required for targeting to polysomes. As to expression, the 57 kDa isoform PMR1 is the only form detected at protein levels in human cell lines. Expressed in heart.

The protein resides in the secreted. It is found in the endoplasmic reticulum. It localises to the cell membrane. The protein localises to the cytoplasm. Probable oxidoreductase. Lacks peroxidase activity. Inhibits the peroxidase activity of PXDN through its interaction. Its function is as follows. Endonuclease selectively degrading some target mRNAs while they are engaged by translating ribosomes, among which albumin and beta-globin mRNAs. The polypeptide is Probable oxidoreductase PXDNL (Homo sapiens (Human)).